We begin with the raw amino-acid sequence, 144 residues long: 3-hydroxyacyl-[acyl-carrier-protein] dehydratase FabZ (144 aa).

Histidine 49 is an active-site residue.

This sequence belongs to the thioester dehydratase family. FabZ subfamily.

It localises to the cytoplasm. It catalyses the reaction a (3R)-hydroxyacyl-[ACP] = a (2E)-enoyl-[ACP] + H2O. Functionally, involved in unsaturated fatty acids biosynthesis. Catalyzes the dehydration of short chain beta-hydroxyacyl-ACPs and long chain saturated and unsaturated beta-hydroxyacyl-ACPs. The chain is 3-hydroxyacyl-[acyl-carrier-protein] dehydratase FabZ from Clostridium kluyveri (strain NBRC 12016).